Consider the following 725-residue polypeptide: IML2-like protein YKR018C (725 aa).

Position 196 is a phosphothreonine (Thr-196). Ser-246, Ser-377, and Ser-380 each carry phosphoserine.

The protein belongs to the IML2 family.

It is found in the cytoplasm. The protein resides in the nucleus. The sequence is that of IML2-like protein YKR018C from Saccharomyces cerevisiae (strain ATCC 204508 / S288c) (Baker's yeast).